The following is a 449-amino-acid chain: N-succinylarginine dihydrolase (449 aa).

Residues 19 to 28 (GGLSYGNVAS), Asn-110, and 137 to 138 (HR) contribute to the substrate site. Residues 23-43 (YGNVASQSNSQQASNPREAAR) form a disordered region. The segment covering 27-37 (ASQSNSQQASN) has biased composition (low complexity). Glu-174 is a catalytic residue. Residue Arg-214 participates in substrate binding. Residue His-250 is part of the active site. 2 residues coordinate substrate: Asp-252 and Asn-365. The active-site Nucleophile is the Cys-371.

It belongs to the succinylarginine dihydrolase family. Homodimer.

The enzyme catalyses N(2)-succinyl-L-arginine + 2 H2O + 2 H(+) = N(2)-succinyl-L-ornithine + 2 NH4(+) + CO2. Its pathway is amino-acid degradation; L-arginine degradation via AST pathway; L-glutamate and succinate from L-arginine: step 2/5. Its function is as follows. Catalyzes the hydrolysis of N(2)-succinylarginine into N(2)-succinylornithine, ammonia and CO(2). In Pseudomonas putida (strain ATCC 47054 / DSM 6125 / CFBP 8728 / NCIMB 11950 / KT2440), this protein is N-succinylarginine dihydrolase.